Reading from the N-terminus, the 353-residue chain is Cytochrome c biogenesis protein CcsA (353 aa).

The next 8 helical transmembrane spans lie at 15 to 35 (FAIL…PNLP), 37 to 57 (LAAL…TLLG), 68 to 88 (LSNL…VHLI), 97 to 117 (LVGV…TMTL), 142 to 162 (VMML…AFLI), 261 to 281 (IIGL…VWAN), 288 to 308 (WSWD…AAYL), and 322 to 342 (AILA…VNLL).

Belongs to the CcmF/CycK/Ccl1/NrfE/CcsA family. In terms of assembly, may interact with ccs1.

Its subcellular location is the cellular thylakoid membrane. In terms of biological role, required during biogenesis of c-type cytochromes (cytochrome c6 and cytochrome f) at the step of heme attachment. The sequence is that of Cytochrome c biogenesis protein CcsA from Nostoc punctiforme (strain ATCC 29133 / PCC 73102).